Consider the following 473-residue polypeptide: MQKTKMIFTVGPASETEEIVTAFIKAGMNASRHNFSHGDHAEHGGRIALVKKVRAKLNKPVAICLDTKGPEIRTGDFNPSKLELQKGSKFTIVCGEEIVGDATKCSISYKDLYKDVKPGNTILIDDGLVGLTVEAIEGTNVICTVANTGLVGSHKGVNVPNVSIQLPAMTEKDKSDLIFGCKEEIDMVSASFIRKPEDVLAIRKVLNENGGENIQIFSKIENQEGVDNIDAIIEVSDGIMVARGDMGVEIPIQRVPLIQKMIIKKCNAVGKPVITATQMLDSMMRNPRPTRAEASDIANAIFDGTDAIMLSGESANGSYPIEAVTTMAKIAQEAENEINYDKFLAERKGNEKKNTSDVISLGTCTAAADLEASAIITATQTGSTARTVSKYRPKAPVIAVTPSEKVARKLAMSWGVHPIISDKFGSTDELISTSVDKALEAGYVQKGDLVVVAAGVPTNVSGTTNMLKVQVVE.

Arginine 32 is a binding site for substrate. 4 residues coordinate K(+): asparagine 34, serine 36, aspartate 66, and threonine 67. Residue 34–37 participates in ATP binding; sequence NFSH. ATP is bound by residues arginine 73 and lysine 155. Glutamate 221 is a Mg(2+) binding site. Residues glycine 244, aspartate 245, and threonine 277 each coordinate substrate. A Mg(2+)-binding site is contributed by aspartate 245.

It belongs to the pyruvate kinase family. As to quaternary structure, homotetramer. The cofactor is Mg(2+). K(+) is required as a cofactor.

The catalysed reaction is pyruvate + ATP = phosphoenolpyruvate + ADP + H(+). The protein operates within carbohydrate degradation; glycolysis; pyruvate from D-glyceraldehyde 3-phosphate: step 5/5. The protein is Pyruvate kinase (pyk) of Clostridium acetobutylicum (strain ATCC 824 / DSM 792 / JCM 1419 / IAM 19013 / LMG 5710 / NBRC 13948 / NRRL B-527 / VKM B-1787 / 2291 / W).